Here is a 680-residue protein sequence, read N- to C-terminus: Epithelial splicing regulatory protein 1 (680 aa).

RRM domains are found at residues 224 to 301, 325 to 405, and 444 to 524; these read TVVR…KATG, VIVR…RSTA, and DCIR…QCSA. Ser-542 is subject to Phosphoserine. An Omega-N-methylarginine modification is found at Arg-581.

This sequence belongs to the ESRP family. In terms of tissue distribution, epithelial cell-specific. Epithelial-specific expression in diverse tissues and organs with particularly notable levels of expression in skin and gastrointestinal epithelia.

The protein localises to the nucleus. Its function is as follows. mRNA splicing factor that regulates the formation of epithelial cell-specific isoforms. Specifically regulates the expression of FGFR2-IIIb, an epithelial cell-specific isoform of FGFR2. Also regulates the splicing of CD44, CTNND1, ENAH, 3 transcripts that undergo changes in splicing during the epithelial-to-mesenchymal transition (EMT). Acts by directly binding specific sequences in mRNAs. Binds the GU-rich sequence motifs in the ISE/ISS-3, a cis-element regulatory region present in the mRNA of FGFR2. Regulates splicing and expression of genes involved in inner ear development, auditory hair cell differentiation, and cell fate specification in the cochlear epithelium. In Mus musculus (Mouse), this protein is Epithelial splicing regulatory protein 1 (Esrp1).